Reading from the N-terminus, the 343-residue chain is Cell division protein ZipA (343 aa).

Residues 1-4 (MDLN) are Periplasmic-facing. The chain crosses the membrane as a helical span at residues 5–25 (TILIILGILALIGLVAHGIWS). Over 26–343 (NRREKSQYFD…MAEAAYLARV (318 aa)) the chain is Cytoplasmic. A disordered region spans residues 39–98 (AFHRNPQSTGRPSAQASQPMTPNFAQPAKETEQIRQTYQEPQVRQMSSSPEQQTRPTAQA). 2 stretches are compositionally biased toward polar residues: residues 43-62 (NPQS…TPNF) and 72-95 (IRQT…TRPT).

Belongs to the ZipA family. Interacts with FtsZ via their C-terminal domains.

The protein localises to the cell inner membrane. Essential cell division protein that stabilizes the FtsZ protofilaments by cross-linking them and that serves as a cytoplasmic membrane anchor for the Z ring. Also required for the recruitment to the septal ring of downstream cell division proteins. This is Cell division protein ZipA from Actinobacillus succinogenes (strain ATCC 55618 / DSM 22257 / CCUG 43843 / 130Z).